Reading from the N-terminus, the 292-residue chain is NAD(P)H-hydrate epimerase (292 aa).

A mitochondrion-targeting transit peptide spans Met1–Thr52. Positions Ala68–Leu279 constitute a YjeF N-terminal domain. Asn122–Asp126 contributes to the (6S)-NADPHX binding site. The K(+) site is built by Asn123 and Asp189. (6S)-NADPHX-binding positions include Gly193–Ala199 and Asp222. Ser225 contacts K(+).

The protein belongs to the NnrE/AIBP family. K(+) is required as a cofactor.

It is found in the mitochondrion. Its subcellular location is the secreted. The enzyme catalyses (6R)-NADHX = (6S)-NADHX. The catalysed reaction is (6R)-NADPHX = (6S)-NADPHX. Catalyzes the epimerization of the S- and R-forms of NAD(P)HX, a damaged form of NAD(P)H that is a result of enzymatic or heat-dependent hydration. This is a prerequisite for the S-specific NAD(P)H-hydrate dehydratase to allow the repair of both epimers of NAD(P)HX. This Xenopus tropicalis (Western clawed frog) protein is NAD(P)H-hydrate epimerase.